Consider the following 177-residue polypeptide: Thymidine kinase (177 aa).

ATP is bound at residue 11–18 (GPMFSGKS). The active-site Proton acceptor is Glu83. Phe113 provides a ligand contact to substrate. Residues Cys138 and Cys141 each contribute to the Zn(2+) site. Residue 157–161 (IEIIG) participates in substrate binding. 2 residues coordinate Zn(2+): Cys170 and Cys173.

Belongs to the thymidine kinase family. As to quaternary structure, homotetramer. Two molecules of substrate bind to each enzyme tetramer.

The enzyme catalyses thymidine + ATP = dTMP + ADP + H(+). Phosphorylates thymidine and thymidine analogs, such as azidothymidine (AZT). Part of the salvage pathway for pyrimidine deoxyribonucleotide synthesis. The chain is Thymidine kinase (OPG101) from Homo sapiens (Human).